The sequence spans 37 residues: Photosystem I reaction center subunit IX (37 aa).

A helical transmembrane segment spans residues 4-24 (FLSSAPVLLTAMMVFTAGLLI).

Belongs to the PsaJ family.

The protein localises to the cellular thylakoid membrane. Functionally, may help in the organization of the PsaE and PsaF subunits. The chain is Photosystem I reaction center subunit IX from Picosynechococcus sp. (strain ATCC 27264 / PCC 7002 / PR-6) (Agmenellum quadruplicatum).